Here is a 503-residue protein sequence, read N- to C-terminus: MEEFQGYLELDRSQQHDFLYPLIFREYIYALAHDRGLNRSVLLDNVGYDKKSSLLIIKRLISRMYQQNHFLISVNDSNQNRFLGYNKNLYSQMISEVFAVIVEIPFSLRLVSSLEETEIVKSYNLRSIHSIFPFFEDKFPHLNYASDVLIPYPIHLEILVQNLRYCVKDPSSLHLLRLFLHEYYNWNSLITPQKSIFAKSNPRLFLLLYNSYVCEYESILLFLRNQSNHLRLTSSGIFFERICFYEKIKYPVEEVLANDFPATLWFFKDPFMQYVRYRGKSILASKETPLLMNKWKYYLVNFWQCNFYVWSQPGRIHINQLSKHSLDFLGYLSSIRPNISVVRSQLLENSFLMDNAMKKLDTLVPIIPMIGSLAKVKFCNTLGHPISKSTWADSSDSDIIDRFVRIGGNLFHYYSGSSKKKSLYRIKYILRLSCVKTLARKHKSTVRTFLKRLGPKLLDEFFTEEEQIFSLLFPRASSILKRFYRGRIWYLDILCINDLVNHE.

This sequence belongs to the intron maturase 2 family. MatK subfamily.

The protein resides in the plastid. The protein localises to the chloroplast. Usually encoded in the trnK tRNA gene intron. Probably assists in splicing its own and other chloroplast group II introns. In Rubus ursinus (California blackberry), this protein is Maturase K.